The chain runs to 93 residues: Large ribosomal subunit protein uL23c (93 aa).

This sequence belongs to the universal ribosomal protein uL23 family. In terms of assembly, part of the 50S ribosomal subunit.

The protein resides in the plastid. The protein localises to the chloroplast. Binds to 23S rRNA. This is Large ribosomal subunit protein uL23c (rpl23) from Fragaria ananassa (Strawberry).